Here is a 209-residue protein sequence, read N- to C-terminus: uncharacterized protein (209 aa).

Residues 39-75 (VSFENFMERYDTMEKNIQDLQNKYEEMANNLVAVMAD) are a coiled coil. Residues 103 to 131 (TMKDATSLPPPNPNNEQSVFTNGSPTSGK) are disordered. A compositionally biased stretch (polar residues) spans 116 to 129 (NNEQSVFTNGSPTS).

Belongs to the asfivirus K205R family.

Its subcellular location is the host cytoplasm. Functionally, induces host endoplasmic reticulum stress and consequently activates autophagy and NF-kappa-B signaling pathway. In turn, may induce autophagy-mediated STING1 degradation and innate immune evasion. This is an uncharacterized protein from Ornithodoros (relapsing fever ticks).